Reading from the N-terminus, the 347-residue chain is Inositol 2-dehydrogenase (347 aa).

This sequence belongs to the Gfo/Idh/MocA family. As to quaternary structure, homotetramer.

The catalysed reaction is myo-inositol + NAD(+) = scyllo-inosose + NADH + H(+). Involved in the oxidation of myo-inositol (MI) to 2-keto-myo-inositol (2KMI or 2-inosose). This chain is Inositol 2-dehydrogenase, found in Rubrobacter xylanophilus (strain DSM 9941 / JCM 11954 / NBRC 16129 / PRD-1).